A 486-amino-acid polypeptide reads, in one-letter code: Aspartyl/glutamyl-tRNA(Asn/Gln) amidotransferase subunit B (486 aa).

This sequence belongs to the GatB/GatE family. GatB subfamily. As to quaternary structure, heterotrimer of A, B and C subunits.

It carries out the reaction L-glutamyl-tRNA(Gln) + L-glutamine + ATP + H2O = L-glutaminyl-tRNA(Gln) + L-glutamate + ADP + phosphate + H(+). The enzyme catalyses L-aspartyl-tRNA(Asn) + L-glutamine + ATP + H2O = L-asparaginyl-tRNA(Asn) + L-glutamate + ADP + phosphate + 2 H(+). Its function is as follows. Allows the formation of correctly charged Asn-tRNA(Asn) or Gln-tRNA(Gln) through the transamidation of misacylated Asp-tRNA(Asn) or Glu-tRNA(Gln) in organisms which lack either or both of asparaginyl-tRNA or glutaminyl-tRNA synthetases. The reaction takes place in the presence of glutamine and ATP through an activated phospho-Asp-tRNA(Asn) or phospho-Glu-tRNA(Gln). This chain is Aspartyl/glutamyl-tRNA(Asn/Gln) amidotransferase subunit B, found in Orientia tsutsugamushi (strain Boryong) (Rickettsia tsutsugamushi).